A 1050-amino-acid polypeptide reads, in one-letter code: Calmodulin-binding transcription activator 2 (1050 aa).

The segment at residues 15–141 (IKQLLSEAQH…YLEVKGNRMS (127 aa)) is a DNA-binding region (CG-1). Composition is skewed to polar residues over residues 141 to 171 (STSGTKENHSNSLSGTGSVNVDSTATRSSIL) and 183 to 196 (SRQASSSLQQNPEP). Disordered regions lie at residues 141-196 (STSG…NPEP) and 223-246 (NRDGWTSAHGNRVKGSNSQRSGDV). 2 ANK repeats span residues 661–690 (DGQGVLHLAAALGYDWAIKPILAAGVSINF) and 694–723 (NGWSALHWAAFSGREDTVAVLVSLGADAGA). 2 consecutive IQ domains span residues 870-899 (VHAAAVQIQKKYRGWKKRKEFLLIRQRIVK) and 893-922 (IRQRIVKIQAHVRGHQVRKQYRAIIWSVGL). Residues 918–940 (WSVGLLEKIILRWRRKGSGLRGF) are calmodulin-binding. Positions 957-985 (QEDDYDFLKEGRKQTEERLQKALTRVKSM) form a coiled coil. Position 984 is a phosphoserine (Ser-984).

This sequence belongs to the CAMTA family. In terms of tissue distribution, expressed in roots, stems, old leaves, petals, sepals, top of carpels, stigmas, stamen filaments, anthers and siliques, but not in pollen.

It localises to the nucleus. Transcription activator that binds to the DNA consensus sequence 5'-[ACG]CGCG[GTC]-3'. Regulates transcriptional activity in response to calcium signals. Binds calmodulin in a calcium-dependent manner. Involved in freezing tolerance in association with CAMTA1 and CAMTA3. Contributes together with CAMTA1 and CAMTA3 to the positive regulation of the cold-induced expression of DREB1A/CBF3, DREB1B/CBF1 and DREB1C/CBF2. Involved together with CAMTA3 and CAMTA4 in the positive regulation of a general stress response. Involved in tolerance to aluminum. Binds to the promoter of ALMT1 transporter and contributes to the positive regulation of aluminum-induced expression of ALMT1. This chain is Calmodulin-binding transcription activator 2, found in Arabidopsis thaliana (Mouse-ear cress).